Consider the following 310-residue polypeptide: Ribose-phosphate pyrophosphokinase (310 aa).

Residues 34 to 36 (DME) and 93 to 94 (RQ) each bind ATP. 2 residues coordinate Mg(2+): H127 and D167. Residue K190 is part of the active site. Residues R192, D216, and 220 to 224 (DSGGT) contribute to the D-ribose 5-phosphate site.

This sequence belongs to the ribose-phosphate pyrophosphokinase family. Class I subfamily. Homohexamer. The cofactor is Mg(2+).

Its subcellular location is the cytoplasm. It carries out the reaction D-ribose 5-phosphate + ATP = 5-phospho-alpha-D-ribose 1-diphosphate + AMP + H(+). It functions in the pathway metabolic intermediate biosynthesis; 5-phospho-alpha-D-ribose 1-diphosphate biosynthesis; 5-phospho-alpha-D-ribose 1-diphosphate from D-ribose 5-phosphate (route I): step 1/1. Involved in the biosynthesis of the central metabolite phospho-alpha-D-ribosyl-1-pyrophosphate (PRPP) via the transfer of pyrophosphoryl group from ATP to 1-hydroxyl of ribose-5-phosphate (Rib-5-P). The sequence is that of Ribose-phosphate pyrophosphokinase from Granulibacter bethesdensis (strain ATCC BAA-1260 / CGDNIH1).